Reading from the N-terminus, the 170-residue chain is Mitochondrial fission 1 protein A (170 aa).

The stretch at 90–123 (REKLYLLAVGYYRSGNYSRSRQLVDRCIEMQADW) is one TPR repeat. A helical transmembrane segment spans residues 142–162 (VIGIGITATAFGAVGLIAGGI).

The protein belongs to the FIS1 family. Interacts with ARC5.

The protein localises to the mitochondrion outer membrane. It is found in the peroxisome membrane. Its function is as follows. Component of the peroxisomal and mitochondrial division machineries. Plays a role in promoting the fission of mitochondria and peroxisomes. This chain is Mitochondrial fission 1 protein A (FIS1A), found in Arabidopsis thaliana (Mouse-ear cress).